A 308-amino-acid polypeptide reads, in one-letter code: MNLMDIAKIFSLLQPEKEEEDTGTGEKQALNQAVYDNDSCTLDHLLHQERYKRFINSRSGWGIPGTPLRLAASYGHLNCVKVLLEHGADVDSLDVKAQTPLFTAVSHGHLECVRMLLEAGACPSGSIYNNCSPVLTASRDGAFAILQELLGHGAEANVKAKLPVWASNIASCSGPLYLAAVYGHLDCFRLLLLYGADPDYNCTDQGLLSRVPQPRTLLEICLHHNCEPEYIQLLIDFGANIYLPSLPVDPTSQDDKGIKLLLQARATPRSLLSQTRLVIRRSLCRANQSQATDQLDIPPVLISYLKHQ.

ANK repeat units follow at residues 63-92 (IPGT…DVDS), 96-125 (KAQT…CPSG), 129-158 (NNCS…EANV), 171-200 (SCSG…DPDY), and 213-243 (QPRT…NIYL). The SOCS box domain occupies 268–308 (PRSLLSQTRLVIRRSLCRANQSQATDQLDIPPVLISYLKHQ).

The protein belongs to the ankyrin SOCS box (ASB) family. Interacts with CUL5 and RNF7.

It participates in protein modification; protein ubiquitination. Probable substrate-recognition component of a SCF-like ECS (Elongin-Cullin-SOCS-box protein) E3 ubiquitin-protein ligase complex which mediates the ubiquitination and subsequent proteasomal degradation of target proteins. The chain is Ankyrin repeat and SOCS box protein 12 (Asb12) from Mus musculus (Mouse).